A 195-amino-acid chain; its full sequence is Imidazoleglycerol-phosphate dehydratase (195 aa).

The protein belongs to the imidazoleglycerol-phosphate dehydratase family.

It localises to the cytoplasm. It catalyses the reaction D-erythro-1-(imidazol-4-yl)glycerol 3-phosphate = 3-(imidazol-4-yl)-2-oxopropyl phosphate + H2O. The protein operates within amino-acid biosynthesis; L-histidine biosynthesis; L-histidine from 5-phospho-alpha-D-ribose 1-diphosphate: step 6/9. The chain is Imidazoleglycerol-phosphate dehydratase from Aromatoleum aromaticum (strain DSM 19018 / LMG 30748 / EbN1) (Azoarcus sp. (strain EbN1)).